A 404-amino-acid chain; its full sequence is Serine/threonine transporter SstT (404 aa).

Helical transmembrane passes span 11–31 (IINANLVLQIIFGIAAGIILA), 44–64 (LGGLFVGALKAVAPILVFVLV), 82–102 (IISLYLIGTLLAALTAVTMSF), 144–164 (TANYIGILAWAIGLGIALHHA), 179–199 (VSFIVRFIIRLAPIGIFGLVA), 218–238 (GVLLGSMAIVALVINPLMVFI), 290–310 (IPLGATINMAGAAITITVLTL), 316–336 (MGIQVDMFTALLLSVVAAISA), and 363–383 (VAMQVVGVGFIIGVIQDSAET).

The protein belongs to the dicarboxylate/amino acid:cation symporter (DAACS) (TC 2.A.23) family.

It localises to the cell inner membrane. The catalysed reaction is L-serine(in) + Na(+)(in) = L-serine(out) + Na(+)(out). It catalyses the reaction L-threonine(in) + Na(+)(in) = L-threonine(out) + Na(+)(out). Its function is as follows. Involved in the import of serine and threonine into the cell, with the concomitant import of sodium (symport system). In Desulfotalea psychrophila (strain LSv54 / DSM 12343), this protein is Serine/threonine transporter SstT.